The following is a 593-amino-acid chain: ETS-related transcription factor Elf-2 (593 aa).

The residue at position 107 (S107) is a Phosphoserine. The segment at 146–201 (VEVSTEESEPMDTSPIPTSPDSHEPMKKKKVGRKPKTQQSPISNGSPELGIKKKPR) is disordered. Positions 171-181 (MKKKKVGRKPK) are enriched in basic residues. A Phosphothreonine modification is found at T182. Over residues 182–191 (TQQSPISNGS) the composition is skewed to polar residues. Phosphoserine occurs at positions 185 and 191. Positions 208 to 290 (TYLWEFLLDL…EGQRLVYQFK (83 aa)) form a DNA-binding region, ETS. Residues S363 and S372 each carry the phosphoserine modification. A Phosphothreonine modification is found at T376. Phosphoserine is present on S430. R494 carries the post-translational modification Omega-N-methylarginine. Position 521 is a phosphothreonine (T521). Residue K536 forms a Glycyl lysine isopeptide (Lys-Gly) (interchain with G-Cter in SUMO2) linkage.

The protein belongs to the ETS family. In terms of assembly, interacts with the LIM domains of LMO2. Interacts via its N-terminal region with RUNX1. As to expression, expressed in all fetal and adult tissues examined. Among fetal tissues, highest levels of expression detected in heart, lung, liver and kidney, and lower levels in brain. Among adult tissues, highest levels of expression detected in heart, placenta, lung, skeletal muscle, spleen, thymus, testis and ovary. Moderate expression in prostate, small intestine, kidney, liver and pancreas, and weak expression in colon, brain and peripheral blood lymphocytes.

It localises to the nucleus. Functionally, isoform 1 transcriptionally activates the LYN and BLK promoters and acts synergistically with RUNX1 to transactivate the BLK promoter. In terms of biological role, isoform 2 may function in repression of RUNX1-mediated transactivation. The sequence is that of ETS-related transcription factor Elf-2 from Homo sapiens (Human).